Reading from the N-terminus, the 206-residue chain is FMN-dependent NADH:quinone oxidoreductase 2 (206 aa).

Position 10 (Ser10) interacts with FMN.

This sequence belongs to the azoreductase type 1 family. As to quaternary structure, homodimer. FMN is required as a cofactor.

It carries out the reaction 2 a quinone + NADH + H(+) = 2 a 1,4-benzosemiquinone + NAD(+). It catalyses the reaction N,N-dimethyl-1,4-phenylenediamine + anthranilate + 2 NAD(+) = 2-(4-dimethylaminophenyl)diazenylbenzoate + 2 NADH + 2 H(+). Quinone reductase that provides resistance to thiol-specific stress caused by electrophilic quinones. Its function is as follows. Also exhibits azoreductase activity. Catalyzes the reductive cleavage of the azo bond in aromatic azo compounds to the corresponding amines. The protein is FMN-dependent NADH:quinone oxidoreductase 2 of Rhizobium etli (strain ATCC 51251 / DSM 11541 / JCM 21823 / NBRC 15573 / CFN 42).